Reading from the N-terminus, the 360-residue chain is sn-glycerol-3-phosphate import ATP-binding protein UgpC (360 aa).

In terms of domain architecture, ABC transporter spans 4–235 (LSLKGVRKSY…PATTFVASFI (232 aa)). Residue 37 to 44 (GPSGCGKS) participates in ATP binding.

The protein belongs to the ABC transporter superfamily. sn-glycerol-3-phosphate importer (TC 3.A.1.1.3) family. The complex is composed of two ATP-binding proteins (UgpC), two transmembrane proteins (UgpA and UgpE) and a solute-binding protein (UgpB).

It is found in the cell inner membrane. It catalyses the reaction sn-glycerol 3-phosphate(out) + ATP + H2O = sn-glycerol 3-phosphate(in) + ADP + phosphate + H(+). Its function is as follows. Part of the ABC transporter complex UgpBAEC involved in sn-glycerol-3-phosphate (G3P) import. Responsible for energy coupling to the transport system. This Burkholderia pseudomallei (strain K96243) protein is sn-glycerol-3-phosphate import ATP-binding protein UgpC.